A 438-amino-acid polypeptide reads, in one-letter code: Glycerophosphocholine cholinephosphodiesterase ENPP6 (438 aa).

The N-terminal stretch at methionine 1–alanine 22 is a signal peptide. The substrate site is built by aspartate 32, serine 69, and asparagine 90. Positions 32 and 69 each coordinate Zn(2+). Serine 69 serves as the catalytic Nucleophile. Position 69 is a phosphoserine (serine 69). Cysteine 140 and cysteine 152 form a disulfide bridge. Residues lysine 162 to asparagine 226 adopt a coiled-coil conformation. The N-linked (GlcNAc...) asparagine glycan is linked to asparagine 163. Residue aspartate 191 coordinates substrate. The Zn(2+) site is built by aspartate 191, histidine 195, aspartate 238, and histidine 239. Histidine 239 is a substrate binding site. Residues asparagine 258, asparagine 287, and asparagine 339 are each glycosylated (N-linked (GlcNAc...) asparagine). Position 352 (histidine 352) interacts with substrate. Position 352 (histidine 352) interacts with Zn(2+). Residue asparagine 402 is glycosylated (N-linked (GlcNAc...) asparagine). Serine 415 carries the GPI-anchor amidated serine lipid modification. Residues alanine 416–cysteine 438 constitute a propeptide, removed in mature form.

The protein belongs to the nucleotide pyrophosphatase/phosphodiesterase family. Zn(2+) serves as cofactor.

Its subcellular location is the cell membrane. The enzyme catalyses sn-glycerol 3-phosphocholine + H2O = phosphocholine + glycerol + H(+). It carries out the reaction a 1-acyl-sn-glycero-3-phosphocholine + H2O = a 1-acyl-sn-glycerol + phosphocholine + H(+). It catalyses the reaction a 1-O-alkyl-sn-glycero-3-phosphocholine + H2O = a 1-O-alkyl-sn-glycerol + phosphocholine + H(+). The catalysed reaction is 1-dodecanoyl-sn-glycero-3-phosphocholine + H2O = 1-dodecanoyl-sn-glycerol + phosphocholine + H(+). The enzyme catalyses 1-hexadecanoyl-sn-glycero-3-phosphocholine + H2O = 1-hexadecanoyl-sn-glycerol + phosphocholine + H(+). It carries out the reaction 1-(5Z,8Z,11Z,14Z-eicosatetraenoyl)-sn-glycero-3-phosphocholine + H2O = 1-(5Z,8Z,11Z,14Z-eicosatetraenoyl)-sn-glycerol + phosphocholine + H(+). It catalyses the reaction 1-tetradecanoyl-sn-glycero-3-phosphocholine + H2O = 1-tetradecanoyl-sn-glycerol + phosphocholine + H(+). The catalysed reaction is sphing-4-enine-phosphocholine + H2O = sphing-4-enine + phosphocholine + H(+). The enzyme catalyses 1-(9Z-octadecenoyl)-sn-glycero-3-phosphocholine + H2O = 1-(9Z-octadecenoyl)-sn-glycerol + phosphocholine + H(+). It carries out the reaction 1-(9Z,12Z)-octadecadienoyl-sn-glycero-3-phosphocholine + H2O = 1-(9Z,12Z-octadecadienoyl)-sn-glycerol + phosphocholine + H(+). It catalyses the reaction glycero-2-phosphocholine + H2O = phosphocholine + glycerol + H(+). In terms of biological role, choline-specific glycerophosphodiesterase that hydrolyzes glycerophosphocholine (GPC) and lysophosphatidylcholine (LPC) and contributes to supplying choline to the cells. Has a preference for LPC with short (12:0 and 14:0) or polyunsaturated (18:2 and 20:4) fatty acids. In vitro, hydrolyzes only choline-containing lysophospholipids, such as sphingosylphosphorylcholine (SPC), platelet-activating factor (PAF) and lysoPAF, but not other lysophospholipids. This chain is Glycerophosphocholine cholinephosphodiesterase ENPP6, found in Danio rerio (Zebrafish).